The chain runs to 114 residues: Large ribosomal subunit protein bL21c (114 aa).

It belongs to the bacterial ribosomal protein bL21 family. Part of the 50S ribosomal subunit.

It is found in the plastid. The protein localises to the chloroplast. Its function is as follows. This protein binds to 23S rRNA. This chain is Large ribosomal subunit protein bL21c, found in Staurastrum punctulatum (Green alga).